Consider the following 858-residue polypeptide: Low-density lipoprotein receptor-related protein 12 (858 aa).

The signal sequence occupies residues 1 to 32 (MARRWSTKESQRRGSAWLLLFLAGVYGNGALA). Residues 33–492 (ELSENVHISG…ENCPVIVPTR (460 aa)) lie on the Extracellular side of the membrane. Disulfide bonds link Cys47–Cys76, Cys103–Cys122, Cys166–Cys178, Cys173–Cys191, Cys185–Cys200, Cys215–Cys232, Cys222–Cys245, Cys239–Cys254, and Cys259–Cys285. In terms of domain architecture, CUB 1 spans 47–159 (CGESPEQIRA…KGFRLAYFSG (113 aa)). A glycan (N-linked (GlcNAc...) asparagine) is linked at Asn75. 2 LDL-receptor class A domains span residues 165–201 (DCAC…EVCA) and 214–255 (PCAY…IDCD). One can recognise a CUB 2 domain in the interval 259–372 (CGQWLKYFYG…RGFNATYQVD (114 aa)). N-linked (GlcNAc...) asparagine glycans are attached at residues Asn284 and Asn366. LDL-receptor class A domains lie at 374–411 (FCLP…INCT), 412–449 (MCQK…KNCF), and 450–486 (FCQP…ENCP). Disulfide bonds link Cys375–Cys388, Cys382–Cys401, Cys395–Cys410, Cys413–Cys426, Cys420–Cys439, Cys433–Cys448, Cys451–Cys463, Cys458–Cys476, and Cys470–Cys485. Asn409 carries N-linked (GlcNAc...) asparagine glycosylation. An N-linked (GlcNAc...) asparagine glycan is attached at Asn441. The chain crosses the membrane as a helical span at residues 493–513 (VITAAVIGSLICGLLLVIALG). Topologically, residues 514 to 858 (CTCKLYSLRM…TSDDEALLLC (345 aa)) are cytoplasmic. 2 disordered regions span residues 619–721 (ALVS…VSPA) and 746–767 (SSST…SGRE). Over residues 712–721 (SVEAPSVSPA) the composition is skewed to low complexity. The span at 746–755 (SSSTTQNRSP) shows a compositional bias: polar residues.

It belongs to the LDLR family. As to quaternary structure, may interact with RACK1, ZFYVE9 and NMRK2.

The protein localises to the membrane. It is found in the coated pit. In terms of biological role, probable receptor, which may be involved in the internalization of lipophilic molecules and/or signal transduction. May act as a tumor suppressor. This Mus musculus (Mouse) protein is Low-density lipoprotein receptor-related protein 12 (Lrp12).